A 164-amino-acid chain; its full sequence is Cell division protein SepF (164 aa).

The segment at 29 to 57 is disordered; that stretch reads INKGRGASQQEYDEYYEDSTPTVTQKEDP.

It belongs to the SepF family. As to quaternary structure, homodimer. Interacts with FtsZ.

It is found in the cytoplasm. In terms of biological role, cell division protein that is part of the divisome complex and is recruited early to the Z-ring. Probably stimulates Z-ring formation, perhaps through the cross-linking of FtsZ protofilaments. Its function overlaps with FtsA. The protein is Cell division protein SepF of Exiguobacterium sibiricum (strain DSM 17290 / CCUG 55495 / CIP 109462 / JCM 13490 / 255-15).